The following is a 1107-amino-acid chain: OTU domain-containing protein 4 (1107 aa).

Position 1 is an N-acetylmethionine (Met1). The region spanning 34–155 (LYRKLVAKDG…GNHYDIVYPI (122 aa)) is the OTU domain. The cys-loop stretch occupies residues 39–45 (VAKDGSC). The active site involves Asp42. Residue Cys45 is the Nucleophile of the active site. Positions 94–104 (LENPQEWVGQV) are variable-loop. The residue at position 120 (Tyr120) is a Phosphotyrosine. Ser126 and Ser128 each carry phosphoserine. Thr131 is subject to Phosphothreonine. Residues 143-148 (FSNGNH) form a his-loop region. His148 is an active-site residue. Ser166, Ser199, Ser202, and Ser204 each carry phosphoserine. Over residues 195 to 206 (EESNSEISDSED) the composition is skewed to acidic residues. Disordered stretches follow at residues 195–239 (EESN…SADL) and 322–431 (KHTP…DFDH). Over residues 226–236 (GSENPKNNGNS) the composition is skewed to polar residues. Phosphoserine is present on Ser340. A compositionally biased stretch (low complexity) spans 392–403 (SSHSTGSQSQKS). Residues 419–431 (RKPDRERAEDFDH) are compositionally biased toward basic and acidic residues. Tyr438 is subject to Phosphotyrosine. The residue at position 442 (Ser442) is a Phosphoserine. Tyr459 is modified (phosphotyrosine). The disordered stretch occupies residues 470–568 (PALSSSSVSQ…KPAEHIPLSN (99 aa)). Residues 473-486 (SSSSVSQSPSQNSN) show a composition bias toward low complexity. Over residues 495–528 (HARDRKGSMRRADAEERKDKDSLRGHTHVDKKPE) the composition is skewed to basic and acidic residues. Phosphoserine occurs at positions 544 and 895. The segment at 918–1107 (LSAASVSSKH…MGDGHRGQHT (190 aa)) is disordered. Residues 963–994 (NREREPGSAEPEPKRTIQSLKEKPEKVKDPKT) are compositionally biased toward basic and acidic residues. 4 positions are modified to phosphoserine: Ser1000, Ser1005, Ser1016, and Ser1017. Residues 1032–1041 (SKQFYNQTYG) are compositionally biased toward polar residues. Ser1042 carries the post-translational modification Phosphoserine. 2 stretches are compositionally biased toward basic and acidic residues: residues 1060–1079 (VRGE…EGYQ) and 1089–1107 (YRGD…GQHT).

Interacts with MYD88; the interaction is direct. Interacts with ALKBH3; the interaction is direct. Interacts with USP7; the interaction is direct. Interacts with USP9X; the interaction is direct. In terms of processing, phosphorylation at Ser-202 and Ser-204 activates 'Lys-63'-specific deubiquitinase activity. Induced upon stimulation with IL1B.

It is found in the cytoplasm. The protein resides in the nucleus. The enzyme catalyses Thiol-dependent hydrolysis of ester, thioester, amide, peptide and isopeptide bonds formed by the C-terminal Gly of ubiquitin (a 76-residue protein attached to proteins as an intracellular targeting signal).. With respect to regulation, phosphorylation on Ser-202 and Ser-204 induces 'Lys-63'-specific deubiquitinase activity. Deubiquitinase which hydrolyzes the isopeptide bond between the ubiquitin C-terminus and the lysine epsilon-amino group of the target protein. May negatively regulate inflammatory and pathogen recognition signaling in innate immune response. Upon phosphorylation at Ser-202 and Ser-204 residues, via IL-1 receptor and Toll-like receptor signaling pathway, specifically deubiquitinates 'Lys-63'-polyubiquitinated MYD88 adapter protein triggering down-regulation of NF-kappa-B-dependent transcription of inflammatory mediators. Independently of the catalytic activity, acts as a scaffold for alternative deubiquitinases to assemble specific deubiquitinase-substrate complexes. Associates with USP7 and USP9X deubiquitinases to stabilize alkylation repair enzyme ALKBH3, thereby promoting the repair of alkylated DNA lesions. This Mus musculus (Mouse) protein is OTU domain-containing protein 4.